The primary structure comprises 449 residues: Sensor protein QseC (449 aa).

At 1 to 12 (MKFTQRLSLRVR) the chain is on the cytoplasmic side. The chain crosses the membrane as a helical span at residues 13 to 33 (LTLIFLILASVTWLLSSFVAW). Residues 34–156 (KQTTDNVDEL…QEWEYREDMA (123 aa)) are Periplasmic-facing. The chain crosses the membrane as a helical span at residues 157-177 (LAIVAGQLIPWLVALPVMLII). The Cytoplasmic segment spans residues 178–449 (MMVLLGRELA…QGGFEAKVSW (272 aa)). The Histidine kinase domain occupies 243-449 (DAAHELRSPL…QGGFEAKVSW (207 aa)). Residue H246 is modified to Phosphohistidine; by autocatalysis.

It localises to the cell inner membrane. It catalyses the reaction ATP + protein L-histidine = ADP + protein N-phospho-L-histidine.. Its function is as follows. Member of a two-component regulatory system QseB/QseC. Activates the flagella regulon by activating transcription of FlhDC. May activate QseB by phosphorylation. The chain is Sensor protein QseC (qseC) from Escherichia coli O157:H7.